We begin with the raw amino-acid sequence, 298 residues long: Spermidine synthase (298 aa).

The 236-residue stretch at 13-248 (DGWFREINNM…GSIGFVVASK (236 aa)) folds into the PABS domain. Gln44 contributes to the S-adenosyl 3-(methylsulfanyl)propylamine binding site. Tyr74 provides a ligand contact to putrescine. Residues Gln75, Asp99, Asp119, 150–151 (DG), and Asp168 each bind S-adenosyl 3-(methylsulfanyl)propylamine. Catalysis depends on Asp168, which acts as the Proton acceptor. Residues 168–171 (DSSD) and Tyr236 each bind putrescine.

This sequence belongs to the spermidine/spermine synthase family.

It catalyses the reaction S-adenosyl 3-(methylsulfanyl)propylamine + putrescine = S-methyl-5'-thioadenosine + spermidine + H(+). It participates in amine and polyamine biosynthesis; spermidine biosynthesis; spermidine from putrescine: step 1/1. This chain is Spermidine synthase, found in Schizosaccharomyces pombe (strain 972 / ATCC 24843) (Fission yeast).